Consider the following 261-residue polypeptide: MWFLILFLALSLGGIDAAPPVQSRIVGGFNCEKNSQPWHVAVYRYNKYICGGVLLDRNWVLTAAHCHVSQYNVWLGKTKLFQREPSAQHRMVSKSFPHPDYNMSLLIIHNPEPEDDESNDLMLLRLSEPADITDAVKPIALPTEEPKLGSTCLVSGWGSITPTKFQTPDDLQCVSIKLLPNEVCVKNHNQKVTDVMLCAGEMGGGKDTCKGDSGGPLICDGVLHGITAWGPIPCGKPNTPGVYTKLIKFTNWIKDTMAKNP.

A signal peptide spans 1–18; that stretch reads MWFLILFLALSLGGIDAA. Positions 19–24 are cleaved as a propeptide — activation peptide; the sequence is PPVQSR. The Peptidase S1 domain maps to 25–258; that stretch reads IVGGFNCEKN…FTNWIKDTMA (234 aa). Disulfide bonds link C31-C173, C50-C66, C152-C219, C184-C198, and C209-C234. H65 serves as the catalytic Charge relay system. Residue N102 is glycosylated (N-linked (GlcNAc...) asparagine). D120 functions as the Charge relay system in the catalytic mechanism. The Charge relay system role is filled by S213.

It belongs to the peptidase S1 family. Kallikrein subfamily.

It catalyses the reaction Preferential cleavage of Arg-|-Xaa bonds in small molecule substrates. Highly selective action to release kallidin (lysyl-bradykinin) from kininogen involves hydrolysis of Met-|-Xaa or Leu-|-Xaa.. Functionally, glandular kallikreins cleave Met-Lys and Arg-Ser bonds in kininogen to release Lys-bradykinin. The polypeptide is Kallikrein 1-related peptidase b11 (Klk1b11) (Mus musculus (Mouse)).